The following is a 1108-amino-acid chain: Retinal guanylyl cyclase 2 (1108 aa).

An N-terminal signal peptide occupies residues M1–T50. The Extracellular segment spans residues L51–A467. Residues C104 and C132 are joined by a disulfide bond. Residues F468–I490 traverse the membrane as a helical segment. Residues R491–P1108 lie on the Cytoplasmic side of the membrane. One can recognise a Protein kinase domain in the interval F532–F812. The region spanning T884–E1014 is the Guanylate cyclase domain.

It belongs to the adenylyl cyclase class-4/guanylyl cyclase family. In terms of assembly, homodimer. Interacts with RD3; promotes the exit of GUCY2F from the endoplasmic reticulum and its trafficking to the photoreceptor outer segments. In terms of processing, there are 9 conserved cysteine residues in sensory guanylate cyclases, 6 in the extracellular domain, which may be involved in intra- or interchain disulfide bonds. Retina. Localized exclusively in the outer nuclear layer and inner segments of the rod and cone photoreceptor cells.

It localises to the photoreceptor outer segment membrane. The catalysed reaction is GTP = 3',5'-cyclic GMP + diphosphate. Its activity is regulated as follows. Activated by GUCA1B when free calcium ions concentration is low, and inhibited by GUCA1B when free calcium ions concentration is high. Inhibited by RD3. Responsible for the synthesis of cyclic GMP (cGMP) in rods and cones of photoreceptors. Plays an essential role in phototransduction, by mediating cGMP replenishment. May also participate in the trafficking of membrane-asociated proteins to the photoreceptor outer segment membrane. The protein is Retinal guanylyl cyclase 2 (GUCY2F) of Homo sapiens (Human).